Consider the following 178-residue polypeptide: Napin-B (178 aa).

The first 21 residues, 1-21 (MANKLFLVSATLAFFFLLTNA), serve as a signal peptide directing secretion. 2 propeptides span residues 22–38 (SIYR…ATNP) and 75–94 (PSWT…NPQG).

Belongs to the 2S seed storage albumins family. As to quaternary structure, the mature protein consists of a small and a large chain linked by disulfide bonds. In terms of tissue distribution, cotyledons and the axis.

In terms of biological role, the small, basic, water-soluble napins are one of the two major kinds of storage proteins synthesized in the seed during its maturation. The protein is Napin-B (NAPB) of Brassica napus (Rape).